The following is a 164-amino-acid chain: B-phycoerythrin alpha chain (164 aa).

(2R,3E)-phycoerythrobilin contacts are provided by C82 and C139.

The protein belongs to the phycobiliprotein family. As to quaternary structure, heteromer of 6 alpha, 6 beta and one gamma chain. In terms of processing, contains two covalently linked bilin chromophores.

Its subcellular location is the plastid. The protein resides in the chloroplast thylakoid membrane. Light-harvesting photosynthetic bile pigment-protein from the phycobiliprotein complex. This chain is B-phycoerythrin alpha chain (cpeA), found in Porphyridium purpureum (Red alga).